The sequence spans 769 residues: Metal transporter CNNM4 (769 aa).

The Extracellular portion of the chain corresponds to 1 to 175 (MAASAGCYYG…RLRVLEEEKP (175 aa)). Residues N99 and N115 are each glycosylated (N-linked (GlcNAc...) asparagine). The CNNM transmembrane domain occupies 175–355 (PLLPIWLQAC…EPYSGIVREE (181 aa)). A helical transmembrane segment spans residues 176–196 (LLPIWLQACIIAVLLTLSGIF). Topologically, residues 197–237 (SGLNLGLMALDPMELRVVQRCGTEKEKRYASKIEPVRRKGN) are cytoplasmic. The segment at residues 238–258 (YLLCSLLLGNVLVNTTLTALL) is an intramembrane region (helical). The Cytoplasmic segment spans residues 259 to 261 (DEL). Residues 262–282 (IGSGLAAVLASTTGIVVLGEI) form a helical membrane-spanning segment. The Extracellular segment spans residues 283 to 292 (VPQALCSRHG). The helical transmembrane segment at 293 to 313 (LAVGANTLWLTRIFMLLTFPV) threads the bilayer. Topologically, residues 314–769 (AYPVSRLLDC…SQHSLQHNAV (456 aa)) are cytoplasmic. CBS domains follow at residues 374 to 435 (MTKV…CTPL) and 442 to 508 (YSHP…ILDE). A disordered region spans residues 717–769 (LMSSRLDSSPQSPEGGTRKPDSTLSERSEVLEDETTSLLNQRNSQHSLQHNAV). A compositionally biased stretch (polar residues) spans 721–730 (RLDSSPQSPE). Residues 732-746 (GTRKPDSTLSERSEV) are compositionally biased toward basic and acidic residues. Residues 752–769 (TSLLNQRNSQHSLQHNAV) are compositionally biased toward polar residues.

Belongs to the ACDP family.

It is found in the cell membrane. Functionally, probable metal transporter. This chain is Metal transporter CNNM4 (cnnm4), found in Xenopus tropicalis (Western clawed frog).